Consider the following 1465-residue polypeptide: Transcriptional elongation regulator MINIYO (1465 aa).

3 disordered regions span residues lysine 27 to arginine 85, leucine 186 to isoleucine 211, and threonine 1113 to isoleucine 1135.

This sequence belongs to the RPAP1 family. As to quaternary structure, interacts with HAG3, NRPB3 and NRPB10L. As to expression, expressed in root and shoot apices and in leaf and flower primordia. Detected in the endosperm, embryo, meristems and in organ primordia, but not in mature cells. Found exclusively in the vascular bundles in mature leaves.

Its subcellular location is the cytoplasm. The protein localises to the nucleus. Positive regulator of transcriptional elongation that is essential for cells to initiate differentiation. Interacts with RNA polymerase II and the Elongator complex and is required to sustain global levels of transcriptional elongation activity, specifically in differentiating tissues. This is Transcriptional elongation regulator MINIYO from Arabidopsis thaliana (Mouse-ear cress).